Here is a 75-residue protein sequence, read N- to C-terminus: Porwaprin-d (75 aa).

The first 24 residues, methionine 1–serine 24, serve as a signal peptide directing secretion. The region spanning arginine 27–isoleucine 72 is the WAP domain. Cystine bridges form between cysteine 34–cysteine 60, cysteine 43–cysteine 64, cysteine 47–cysteine 59, and cysteine 53–cysteine 68.

This sequence belongs to the venom waprin family. Expressed by the venom gland.

The protein localises to the secreted. In terms of biological role, damages membranes of susceptible bacteria. Has no hemolytic activity. Not toxic to mice. Does not inhibit the proteinases elastase and cathepsin G. This chain is Porwaprin-d, found in Pseudechis porphyriacus (Red-bellied black snake).